The following is a 426-amino-acid chain: Neuromedin-U receptor 1 (426 aa).

The Extracellular segment spans residues Met1–Ala65. 3 N-linked (GlcNAc...) asparagine glycosylation sites follow: Asn7, Asn27, and Asn41. Residues Thr66–Leu86 form a helical membrane-spanning segment. Residues Arg87–Tyr97 lie on the Cytoplasmic side of the membrane. The helical transmembrane segment at Tyr98–Leu118 threads the bilayer. At Tyr119 to Thr138 the chain is on the extracellular side. Cysteines 134 and 219 form a disulfide. Residues Leu139–Val161 traverse the membrane as a helical segment. The Cytoplasmic segment spans residues Ala162 to Val181. A helical transmembrane segment spans residues Leu182–Ile202. The Extracellular portion of the chain corresponds to Arg203–Thr235. Residues Ala236–Leu256 traverse the membrane as a helical segment. Over Arg257 to Gln294 the chain is Cytoplasmic. Residues Val295–Ala315 traverse the membrane as a helical segment. The Extracellular portion of the chain corresponds to Asp316 to His338. The chain crosses the membrane as a helical span at residues Val339–Met359. Over Ser360–Ser426 the chain is Cytoplasmic.

Belongs to the G-protein coupled receptor 1 family. As to expression, expressed in greatest abundance in peripheral organs, particularly in elements of the gastrointestinal and urogenital systems with highest levels in testes. In central nervous system structures express levels are much lower than those seen in peripheral organs. Within the CNS, has been detected in highest abundance in the cerebellum, dorsal root ganglia, hippocampus, and spinal cord.

It localises to the cell membrane. Receptor for the neuromedin-U and neuromedin-S neuropeptides. This is Neuromedin-U receptor 1 (NMUR1) from Homo sapiens (Human).